Reading from the N-terminus, the 523-residue chain is Cryptochrome DASH (523 aa).

A Photolyase/cryptochrome alpha/beta domain is found at Arg-6–Leu-142. 2 disordered regions span residues Arg-174–Arg-211 and Lys-486–Val-523. Over residues Arg-496 to Asn-510 the composition is skewed to basic residues.

This sequence belongs to the DNA photolyase class-1 family. The cofactor is FAD. (6R)-5,10-methylene-5,6,7,8-tetrahydrofolate is required as a cofactor.

May have a photoreceptor function. Has weak cyclobutyl pyrimidine photolyase activity when expressed in E.coli and when tested in vitro. This is Cryptochrome DASH (cry-dash) from Xenopus laevis (African clawed frog).